Here is a 598-residue protein sequence, read N- to C-terminus: Elongation factor 4 (598 aa).

Residues 4–181 enclose the tr-type G domain; it reads KKIRNFAIIA…AIVNLIPPPQ (178 aa). Residues 16–21 and 128–131 contribute to the GTP site; these read DHGKST and NKID.

It belongs to the TRAFAC class translation factor GTPase superfamily. Classic translation factor GTPase family. LepA subfamily.

The protein localises to the cell membrane. It carries out the reaction GTP + H2O = GDP + phosphate + H(+). Functionally, required for accurate and efficient protein synthesis under certain stress conditions. May act as a fidelity factor of the translation reaction, by catalyzing a one-codon backward translocation of tRNAs on improperly translocated ribosomes. Back-translocation proceeds from a post-translocation (POST) complex to a pre-translocation (PRE) complex, thus giving elongation factor G a second chance to translocate the tRNAs correctly. Binds to ribosomes in a GTP-dependent manner. The protein is Elongation factor 4 of Mesomycoplasma hyopneumoniae (strain J / ATCC 25934 / NCTC 10110) (Mycoplasma hyopneumoniae).